Here is a 236-residue protein sequence, read N- to C-terminus: Large ribosomal subunit protein uL1 (236 aa).

This sequence belongs to the universal ribosomal protein uL1 family. In terms of assembly, part of the 50S ribosomal subunit.

In terms of biological role, binds directly to 23S rRNA. The L1 stalk is quite mobile in the ribosome, and is involved in E site tRNA release. Functionally, protein L1 is also a translational repressor protein, it controls the translation of the L11 operon by binding to its mRNA. This Corynebacterium efficiens (strain DSM 44549 / YS-314 / AJ 12310 / JCM 11189 / NBRC 100395) protein is Large ribosomal subunit protein uL1.